Here is an 858-residue protein sequence, read N- to C-terminus: Conidiophore development regulator abaA (858 aa).

The disordered stretch occupies residues 1-22; it reads MSSSLYHPRPVLSSQRYTPSPD. Residues 128-221 constitute a DNA-binding region (TEA); sequence QKDKGGVWRR…QVVKKFFEDL (94 aa). The segment covering 500–522 has biased composition (basic and acidic residues); it reads VEHQRKKEKRTKGDDRKNLDRAG. Disordered stretches follow at residues 500 to 535 and 792 to 858; these read VEHQRKKEKRTKGDDRKNLDRAGSKRKRSEDDGDAA and TGAG…AGGW. The Nuclear localization signal signature appears at 514-521; the sequence is DRKNLDRA. Residues 809-822 are compositionally biased toward polar residues; the sequence is SSDQTALWTQSQWA.

The protein belongs to the TEC1 family.

It is found in the nucleus. AbaA and wetA are pivotal regulators of conidiophore development and conidium maturation. They act individually and together to regulate their own expression and that of numerous other sporulation-specific genes. Binds to the sequence 5'-CATTCY-3', where Y is a pyrimidine, making both major- and minor-groove contacts. Plays a pivotal role in conidiation by regulating cell cycle pathways and other conidiation-related genes. This chain is Conidiophore development regulator abaA, found in Gibberella zeae (strain ATCC MYA-4620 / CBS 123657 / FGSC 9075 / NRRL 31084 / PH-1) (Wheat head blight fungus).